A 275-amino-acid polypeptide reads, in one-letter code: Probable dual specificity protein phosphatase DDB_G0271350 (275 aa).

The 142-residue stretch at 2-143 (GISMILDNFL…LCDLELKLTN (142 aa)) folds into the Tyrosine-protein phosphatase domain. The active-site Phosphocysteine intermediate is the C87.

This sequence belongs to the protein-tyrosine phosphatase family. Non-receptor class dual specificity subfamily.

The enzyme catalyses O-phospho-L-tyrosyl-[protein] + H2O = L-tyrosyl-[protein] + phosphate. It catalyses the reaction O-phospho-L-seryl-[protein] + H2O = L-seryl-[protein] + phosphate. The catalysed reaction is O-phospho-L-threonyl-[protein] + H2O = L-threonyl-[protein] + phosphate. Functionally, has a dual specificity toward Ser/Thr and Tyr-containing proteins. This Dictyostelium discoideum (Social amoeba) protein is Probable dual specificity protein phosphatase DDB_G0271350.